A 725-amino-acid chain; its full sequence is Fatty acid oxidation complex subunit alpha (725 aa).

The tract at residues 1 to 189 (MIYQGENLSV…ALGMIDGVVS (189 aa)) is enoyl-CoA hydratase/isomerase. Residue D296 coordinates substrate. Residues 311–725 (EPVTSAAVLG…APQSLSAPSA (415 aa)) form a 3-hydroxyacyl-CoA dehydrogenase region. NAD(+) is bound by residues M324, D343, 400-402 (VVE), K407, and S429. H450 serves as the catalytic For 3-hydroxyacyl-CoA dehydrogenase activity. N453 lines the NAD(+) pocket. Substrate-binding residues include N500 and Y660.

This sequence in the N-terminal section; belongs to the enoyl-CoA hydratase/isomerase family. The protein in the C-terminal section; belongs to the 3-hydroxyacyl-CoA dehydrogenase family. In terms of assembly, heterotetramer of two alpha chains (FadB) and two beta chains (FadA).

It carries out the reaction a (3S)-3-hydroxyacyl-CoA + NAD(+) = a 3-oxoacyl-CoA + NADH + H(+). The enzyme catalyses a (3S)-3-hydroxyacyl-CoA = a (2E)-enoyl-CoA + H2O. It catalyses the reaction a 4-saturated-(3S)-3-hydroxyacyl-CoA = a (3E)-enoyl-CoA + H2O. The catalysed reaction is (3S)-3-hydroxybutanoyl-CoA = (3R)-3-hydroxybutanoyl-CoA. It carries out the reaction a (3Z)-enoyl-CoA = a 4-saturated (2E)-enoyl-CoA. The enzyme catalyses a (3E)-enoyl-CoA = a 4-saturated (2E)-enoyl-CoA. The protein operates within lipid metabolism; fatty acid beta-oxidation. Involved in the aerobic and anaerobic degradation of long-chain fatty acids via beta-oxidation cycle. Catalyzes the formation of 3-oxoacyl-CoA from enoyl-CoA via L-3-hydroxyacyl-CoA. It can also use D-3-hydroxyacyl-CoA and cis-3-enoyl-CoA as substrate. This Aliivibrio fischeri (strain MJ11) (Vibrio fischeri) protein is Fatty acid oxidation complex subunit alpha.